The sequence spans 510 residues: Transcriptional regulatory protein GAT1 (510 aa).

Ser167 carries the post-translational modification Phosphoserine. Positions Asn220 to Leu256 are enriched in low complexity. 2 disordered regions span residues Asn220 to Ser311 and Gln358 to Lys383. Residues Ser262 and Ser270 each carry the phosphoserine modification. Residues Ser274–Lys287 show a composition bias toward basic residues. The segment covering Ser294 to Pro306 has biased composition (low complexity). The GATA-type zinc-finger motif lies at Cys310–Cys334. Thr369 carries the phosphothreonine modification. Ser399 and Ser418 each carry phosphoserine.

Its subcellular location is the nucleus. Its function is as follows. Positive regulator of multiple nitrogen catabolic genes. The protein is Transcriptional regulatory protein GAT1 (GAT1) of Saccharomyces cerevisiae (strain ATCC 204508 / S288c) (Baker's yeast).